Here is a 364-residue protein sequence, read N- to C-terminus: Mitogen-activated protein kinase 11 (364 aa).

One can recognise a Protein kinase domain in the interval 24–308; the sequence is LQGLRPVGSG…AAEALAHAYF (285 aa). ATP contacts are provided by residues 30-38 and K53; that span reads VGSGAYGSV. E71 serves as a coordination point for nilotinib. Catalysis depends on D150, which acts as the Proton acceptor. T180 is subject to Phosphothreonine; by MAP2K3, MAP2K4 and MAP2K6. Positions 180 to 182 match the TXY motif; that stretch reads TGY. Y182 carries the phosphotyrosine; by MAP2K3, MAP2K4 and MAP2K6 modification. Disordered regions lie at residues 311 to 331 and 343 to 364; these read YHDPEDEPEAEPYDESVEAKE and QEVLSFKPPEPPKPPGSLEIEQ. Residues 314–326 are compositionally biased toward acidic residues; that stretch reads PEDEPEAEPYDES. At Y323 the chain carries Phosphotyrosine; by ZAP70.

It belongs to the protein kinase superfamily. CMGC Ser/Thr protein kinase family. MAP kinase subfamily. As to quaternary structure, interacts with HDAC3 and DUSP16. Mg(2+) is required as a cofactor. Post-translationally, dually phosphorylated on Thr-180 and Tyr-182 by MAP2K3/MKK3, MAP2K4/MKK4 and MAP2K6/MKK6, which activates the enzyme. In terms of tissue distribution, highest levels in the brain and heart. Also expressed in the placenta, lung, liver, skeletal muscle, kidney and pancreas.

Its subcellular location is the cytoplasm. It is found in the nucleus. The catalysed reaction is L-seryl-[protein] + ATP = O-phospho-L-seryl-[protein] + ADP + H(+). The enzyme catalyses L-threonyl-[protein] + ATP = O-phospho-L-threonyl-[protein] + ADP + H(+). Its activity is regulated as follows. Activated by phosphorylation on threonine and tyrosine by MAP2K3/MKK3, MAP2K4/MKK4 and MAP2K6/MKK6. MAP2K3/MKK3 and MAP2K6/MKK6 are both essential for the activation of MAPK11 induced by environmental stress. HDAC3 interacts directly and selectively with MAPK11 to repress ATF2 transcriptional activity, and regulate TNF gene expression in LPS-stimulated cells. Inhibited by SB203580 and pyridinyl-imidazole related compounds. Functionally, serine/threonine kinase which acts as an essential component of the MAP kinase signal transduction pathway. MAPK11 is one of the four p38 MAPKs which play an important role in the cascades of cellular responses evoked by extracellular stimuli such as pro-inflammatory cytokines or physical stress leading to direct activation of transcription factors. Accordingly, p38 MAPKs phosphorylate a broad range of proteins and it has been estimated that they may have approximately 200 to 300 substrates each. MAPK11 functions are mostly redundant with those of MAPK14. Some of the targets are downstream kinases which are activated through phosphorylation and further phosphorylate additional targets. RPS6KA5/MSK1 and RPS6KA4/MSK2 can directly phosphorylate and activate transcription factors such as CREB1, ATF1, the NF-kappa-B isoform RELA/NFKB3, STAT1 and STAT3, but can also phosphorylate histone H3 and the nucleosomal protein HMGN1. RPS6KA5/MSK1 and RPS6KA4/MSK2 play important roles in the rapid induction of immediate-early genes in response to stress or mitogenic stimuli, either by inducing chromatin remodeling or by recruiting the transcription machinery. On the other hand, two other kinase targets, MAPKAPK2/MK2 and MAPKAPK3/MK3, participate in the control of gene expression mostly at the post-transcriptional level, by phosphorylating ZFP36 (tristetraprolin) and ELAVL1, and by regulating EEF2K, which is important for the elongation of mRNA during translation. MKNK1/MNK1 and MKNK2/MNK2, two other kinases activated by p38 MAPKs, regulate protein synthesis by phosphorylating the initiation factor EIF4E2. In the cytoplasm, the p38 MAPK pathway is an important regulator of protein turnover. For example, CFLAR is an inhibitor of TNF-induced apoptosis whose proteasome-mediated degradation is regulated by p38 MAPK phosphorylation. Ectodomain shedding of transmembrane proteins is regulated by p38 MAPKs as well. In response to inflammatory stimuli, p38 MAPKs phosphorylate the membrane-associated metalloprotease ADAM17. Such phosphorylation is required for ADAM17-mediated ectodomain shedding of TGF-alpha family ligands, which results in the activation of EGFR signaling and cell proliferation. Additional examples of p38 MAPK substrates are the FGFR1. FGFR1 can be translocated from the extracellular space into the cytosol and nucleus of target cells, and regulates processes such as rRNA synthesis and cell growth. FGFR1 translocation requires p38 MAPK activation. In the nucleus, many transcription factors are phosphorylated and activated by p38 MAPKs in response to different stimuli. Classical examples include ATF1, ATF2, ATF6, ELK1, PTPRH, DDIT3, TP53/p53 and MEF2C and MEF2A. The p38 MAPKs are emerging as important modulators of gene expression by regulating chromatin modifiers and remodelers. The promoters of several genes involved in the inflammatory response, such as IL6, IL8 and IL12B, display a p38 MAPK-dependent enrichment of histone H3 phosphorylation on 'Ser-10' (H3S10ph) in LPS-stimulated myeloid cells. This phosphorylation enhances the accessibility of the cryptic NF-kappa-B-binding sites marking promoters for increased NF-kappa-B recruitment. Phosphorylates NLRP1 downstream of MAP3K20/ZAK in response to UV-B irradiation and ribosome collisions, promoting activation of the NLRP1 inflammasome and pyroptosis. Phosphorylates methyltransferase DOT1L on 'Ser-834', 'Thr-900', 'Ser-902', 'Thr-984', 'Ser-1001', 'Ser-1009' and 'Ser-1104'. This is Mitogen-activated protein kinase 11 (MAPK11) from Homo sapiens (Human).